We begin with the raw amino-acid sequence, 101 residues long: Large ribosomal subunit protein bL28 (101 aa).

The protein belongs to the bacterial ribosomal protein bL28 family.

In Rhodopseudomonas palustris (strain BisA53), this protein is Large ribosomal subunit protein bL28.